The chain runs to 101 residues: Small ribosomal subunit protein bS18c (101 aa).

The segment covering 1–19 (MNKSKRPFTKSKRSFRRRL) has biased composition (basic residues). The interval 1-23 (MNKSKRPFTKSKRSFRRRLPPIQ) is disordered.

It belongs to the bacterial ribosomal protein bS18 family. As to quaternary structure, part of the 30S ribosomal subunit.

The protein localises to the plastid. It is found in the chloroplast. The protein is Small ribosomal subunit protein bS18c of Draba nemorosa (Woodland whitlowgrass).